A 233-amino-acid polypeptide reads, in one-letter code: 7-cyano-7-deazaguanine synthase (233 aa).

11-21 (LSGGLDSSTVL) serves as a coordination point for ATP. 4 residues coordinate Zn(2+): Cys195, Cys203, Cys206, and Cys209.

The protein belongs to the QueC family. Zn(2+) is required as a cofactor.

It catalyses the reaction 7-carboxy-7-deazaguanine + NH4(+) + ATP = 7-cyano-7-deazaguanine + ADP + phosphate + H2O + H(+). It functions in the pathway purine metabolism; 7-cyano-7-deazaguanine biosynthesis. Catalyzes the ATP-dependent conversion of 7-carboxy-7-deazaguanine (CDG) to 7-cyano-7-deazaguanine (preQ(0)). This Thermosynechococcus vestitus (strain NIES-2133 / IAM M-273 / BP-1) protein is 7-cyano-7-deazaguanine synthase.